Consider the following 266-residue polypeptide: MQGSTRRMSVMTDVHRRFLQLLMTHGVLEEWDVKRLQRHCYKVHDRNATVDKLEDFINNINSVLESLYIEIKRGVTEDDGRPIYALVNLATTSISKMATDFAENELDLFRKALELIIDSETGFGSSTNILNLVDQLKGKKMRKKEAEQVLQKFVQNKWLIEKEGEFTLHGRAILEMEQYIRETYPDAVKICNICHSLLIQGQSCETCGIRMHLPCVAKYFQSNAEPRCPHCNDYWPHEIPKVFDPEKERESGVSKSNKKSLRSRQH.

Residues 1-102 form an interaction with NSMCE3 region; sequence MQGSTRRMSV…SISKMATDFA (102 aa). Residues 191–232 form an RING-type; atypical zinc finger; that stretch reads CNICHSLLIQGQSCETCGIRMHLPCVAKYFQSNAEPRCPHCN. The disordered stretch occupies residues 245–266; it reads PEKERESGVSKSNKKSLRSRQH. Phosphoserine is present on S251. The segment covering 256–266 has biased composition (basic residues); that stretch reads SNKKSLRSRQH.

The protein belongs to the NSE1 family. In terms of assembly, component of the SMC5-SMC6 complex which consists at least of SMC5, SMC6, NSMCE2, NSMCE1, NSMCE4A or EID3 and NSMCE3. NSMCE1, NSMCE4A or EID3 and NSMCE3 probably form a subcomplex that bridges the head domains of the SMC5-SMC6 heterodimer. Interacts with NSMCE3. Post-translationally, ubiquitinated.

It is found in the nucleus. Its subcellular location is the chromosome. It localises to the telomere. The catalysed reaction is S-ubiquitinyl-[E2 ubiquitin-conjugating enzyme]-L-cysteine + [acceptor protein]-L-lysine = [E2 ubiquitin-conjugating enzyme]-L-cysteine + N(6)-ubiquitinyl-[acceptor protein]-L-lysine.. Functionally, RING-type zinc finger-containing E3 ubiquitin ligase that assembles with melanoma antigen protein (MAGE) to catalyze the direct transfer of ubiquitin from E2 ubiquitin-conjugating enzyme to a specific substrate. Within MAGE-RING ubiquitin ligase complex, MAGE stimulates and specifies ubiquitin ligase activity likely through recruitment and/or stabilization of the E2 ubiquitin-conjugating enzyme at the E3:substrate complex. Involved in maintenance of genome integrity, DNA damage response and DNA repair. NSMCE3/MAGEG1 and NSMCE1 ubiquitin ligase are components of SMC5-SMC6 complex and may positively regulate homologous recombination-mediated DNA repair. The chain is Non-structural maintenance of chromosomes element 1 homolog (NSMCE1) from Pongo abelii (Sumatran orangutan).